The chain runs to 210 residues: Imidazoleglycerol-phosphate dehydratase (210 aa).

The tract at residues 185 to 210 is disordered; sequence PRRGGSIPSSKGVLEQAGDNNTEKSK.

This sequence belongs to the imidazoleglycerol-phosphate dehydratase family.

Its subcellular location is the cytoplasm. The catalysed reaction is D-erythro-1-(imidazol-4-yl)glycerol 3-phosphate = 3-(imidazol-4-yl)-2-oxopropyl phosphate + H2O. It functions in the pathway amino-acid biosynthesis; L-histidine biosynthesis; L-histidine from 5-phospho-alpha-D-ribose 1-diphosphate: step 6/9. This is Imidazoleglycerol-phosphate dehydratase from Prochlorococcus marinus (strain SARG / CCMP1375 / SS120).